Here is a 143-residue protein sequence, read N- to C-terminus: MAKKIVGFIKLQIPAGKANPSPPVGPALGQRGLNIMEFCKAFNAQTQGMEPGLPVPVVITAYADKSFTFVMKTPPATVLIKKAAKVDKGSSKPHTDKVGSITRAQAEEIAKTKMPDLTAADLDAAVRTIAGSARSMGITVEGV.

The protein belongs to the universal ribosomal protein uL11 family. As to quaternary structure, part of the ribosomal stalk of the 50S ribosomal subunit. Interacts with L10 and the large rRNA to form the base of the stalk. L10 forms an elongated spine to which L12 dimers bind in a sequential fashion forming a multimeric L10(L12)X complex. Post-translationally, one or more lysine residues are methylated.

Its function is as follows. Forms part of the ribosomal stalk which helps the ribosome interact with GTP-bound translation factors. The polypeptide is Large ribosomal subunit protein uL11 (Burkholderia multivorans (strain ATCC 17616 / 249)).